The chain runs to 829 residues: Periplasmic nitrate reductase (829 aa).

The signal sequence occupies residues methionine 1–glutamate 30. Residues leucine 36–aspartate 92 enclose the 4Fe-4S Mo/W bis-MGD-type domain. Residues cysteine 43, cysteine 46, cysteine 50, and cysteine 78 each contribute to the [4Fe-4S] cluster site. Residues lysine 80, glutamine 147, asparagine 172, cysteine 176, tryptophan 209–methionine 216, serine 240–histidine 244, glutamine 259–aspartate 261, methionine 370, glutamine 374, asparagine 480, serine 506–aspartate 507, lysine 529, aspartate 556, and threonine 716–threonine 725 contribute to the Mo-bis(molybdopterin guanine dinucleotide) site. Phenylalanine 792 contributes to the substrate binding site. Mo-bis(molybdopterin guanine dinucleotide)-binding residues include asparagine 800 and lysine 817.

Belongs to the prokaryotic molybdopterin-containing oxidoreductase family. NasA/NapA/NarB subfamily. As to quaternary structure, component of the periplasmic nitrate reductase NapAB complex composed of NapA and NapB. Requires [4Fe-4S] cluster as cofactor. Mo-bis(molybdopterin guanine dinucleotide) serves as cofactor.

It is found in the periplasm. It carries out the reaction 2 Fe(II)-[cytochrome] + nitrate + 2 H(+) = 2 Fe(III)-[cytochrome] + nitrite + H2O. In terms of biological role, catalytic subunit of the periplasmic nitrate reductase complex NapAB. Receives electrons from NapB and catalyzes the reduction of nitrate to nitrite. The chain is Periplasmic nitrate reductase from Pseudomonas aeruginosa (strain ATCC 15692 / DSM 22644 / CIP 104116 / JCM 14847 / LMG 12228 / 1C / PRS 101 / PAO1).